The sequence spans 20 residues: Collagenolytic protease 36 kDa C (20 aa).

In terms of domain architecture, Peptidase S1 spans I1–D20. Positions I1–D20 are disordered.

The protein belongs to the peptidase S1 family.

The enzyme catalyses Hydrolysis of proteins, with broad specificity for peptide bonds. Native collagen is cleaved about 75% of the length of the molecule from the N-terminus. Low activity on small molecule substrates of both trypsin and chymotrypsin.. Its function is as follows. This enzyme is a serine protease capable of degrading the native triple helix of collagen. This is Collagenolytic protease 36 kDa C from Paralithodes camtschaticus (Red king crab).